A 275-amino-acid chain; its full sequence is Putative carbamate hydrolase RutD (275 aa).

The AB hydrolase-1 domain maps to 15–116 (TVVLSSGLGG…SLVVINGWTV (102 aa)).

Belongs to the AB hydrolase superfamily. Hydrolase RutD family.

The catalysed reaction is carbamate + 2 H(+) = NH4(+) + CO2. Involved in pyrimidine catabolism. May facilitate the hydrolysis of carbamate, a reaction that can also occur spontaneously. The sequence is that of Putative carbamate hydrolase RutD from Pantoea ananatis (strain LMG 20103).